The following is a 241-amino-acid chain: ATP synthase subunit a (241 aa).

5 helical membrane passes run 30–50, 89–109, 128–148, 193–213, and 214–234; these read GQVF…VLVG, LPFI…GALI, INTT…AGLS, LAVG…VMLL, and GLFT…FYIG.

The protein belongs to the ATPase A chain family. In terms of assembly, F-type ATPases have 2 components, CF(1) - the catalytic core - and CF(0) - the membrane proton channel. CF(1) has five subunits: alpha(3), beta(3), gamma(1), delta(1), epsilon(1). CF(0) has four main subunits: a, b, b' and c.

Its subcellular location is the cellular thylakoid membrane. In terms of biological role, key component of the proton channel; it plays a direct role in the translocation of protons across the membrane. In Synechococcus sp. (strain CC9605), this protein is ATP synthase subunit a.